A 108-amino-acid chain; its full sequence is PTS system galactose-specific EIIB component (108 aa).

Residues 3 to 108 form the PTS EIIB type-3 domain; that stretch reads DKVIALACAA…VLAAAENLMN (106 aa). The active-site Phosphocysteine intermediate is the Cys10. Cys10 carries the phosphocysteine; by EIIA modification.

The catalysed reaction is N(pros)-phospho-L-histidyl-[protein] + D-galactose(out) = D-galactose 6-phosphate(in) + L-histidyl-[protein]. In terms of biological role, the phosphoenolpyruvate-dependent sugar phosphotransferase system (sugar PTS), a major carbohydrate active transport system, catalyzes the phosphorylation of incoming sugar substrates concomitantly with their translocation across the cell membrane. Involved in galactose transport with PtcA and Lmg_0963. The chain is PTS system galactose-specific EIIB component from Lactococcus lactis subsp. cremoris (strain MG1363).